The primary structure comprises 2144 residues: Insulin-like receptor (2144 aa).

The N-terminal stretch at 1-43 (MFNMPRGVTKSKSKRGKIKMENDMAAAATTTACTLGHICVLCR) is a signal peptide. A glycan (N-linked (GlcNAc...) asparagine) is linked at N74. Basic residues predominate over residues 174-199 (RRQHQQQHHHHYQHHHQQHHQQHHQR). The segment at 174–200 (RRQHQQQHHHHYQHHHQQHHQQHHQRQ) is disordered. N203 carries an N-linked (GlcNAc...) asparagine glycan. The disordered stretch occupies residues 229–256 (NYKQQQQLQHNQQLPRATPQQKQQEKDR). Positions 232 to 242 (QQQQLQHNQQL) are enriched in low complexity. N265, N356, N376, N406, N468, and N509 each carry an N-linked (GlcNAc...) asparagine glycan. Disulfide bonds link C531–C539, C535–C545, C546–C554, C550–C564, C567–C576, C580–C591, C597–C618, and C635–C638. An FU repeat occupies 542-586 (EHTCCSQDCLGGCVIDKNGNESCISCRNVSFNNICMDSCPKGYYQ). 2 N-linked (GlcNAc...) asparagine glycosylation sites follow: N561 and N569. N-linked (GlcNAc...) asparagine glycosylation is found at N751, N810, N824, N839, N864, N898, N946, N1053, N1147, N1218, and N1265. 2 consecutive Fibronectin type-III domains span residues 825-927 (VTTK…TNPG) and 928-1026 (RPSK…EYDD). Residues 1053 to 1084 (NGSSDKSDGAEGAALDSNAIPNGGATNPSRRR) form a disordered region. Positions 1210–1305 (LKVDLEHANN…EVEHIKVEPP (96 aa)) constitute a Fibronectin type-III 3 domain. Residues 1311 to 1331 (VFFWLLGIGLAFLIVSLFGYV) form a helical membrane-spanning segment. Residues 1332–2144 (CYLHKRKVPS…PPNGFIGREA (813 aa)) are Cytoplasmic-facing. The chico-binding stretch occupies residues 1351-1354 (NPFY). Residue Y1354 is modified to Phosphotyrosine; by autocatalysis. One can recognise a Protein kinase domain in the interval 1371–1659 (IIQLAPLGQG…LEPQCPNSQF (289 aa)). ATP-binding positions include 1377–1385 (LGQGSFGMV) and K1405. Residue D1519 is the Proton acceptor of the active site. A phosphotyrosine; by autocatalysis mark is found at Y1545, Y1549, and Y1550. 4 disordered regions span residues 1690 to 1724 (VPLD…DQPP), 1788 to 1871 (RGYE…KKTV), 1886 to 1962 (LFNH…ISDN), and 2020 to 2144 (ISHN…GREA). Position 1816 is a phosphoserine (S1816). Composition is skewed to low complexity over residues 1849–1860 (STASAGSSNASS) and 1894–1916 (SNAS…NLTS). Residues 2042-2062 (SDEDNEQEEDDEDEDDDVDDE) show a composition bias toward acidic residues. The span at 2063 to 2073 (HVEHIKMERMP) shows a compositional bias: basic and acidic residues. Residues 2084–2120 (SKTQPPRSRSVSQTRKSPTNPNSGIGATGAGNRSNLL) are compositionally biased toward polar residues.

This sequence belongs to the protein kinase superfamily. Tyr protein kinase family. Insulin receptor subfamily. As to quaternary structure, tetramer of 2 alpha and 2 beta chains linked by disulfide bonds. The alpha chains contribute to the formation of the ligand-binding domain, while the beta chains carry the kinase domain. Interacts (via C-terminal cytoplasmic region) with dock/dreadlocks (via SH2 and SH3 domains); when autophosphorylated. May interact (via beta subunit) with chico/IRS-1; this interaction may lead to tyrosine phosphorylation of the insulin receptor substrate chico. Interacts with Elp6; the interaction may stabilize Elp6. The cofactor is Mn(2+). The 280 kDa proreceptor is proteolytically processed to form a 120 kDa alpha subunit and a 170 kDa beta subunit. The beta subunit undergoes cell-specific cleavage to generate a 90 kDa beta subunit and a free 60 kDa C-terminal subunit. Both the 90 kDa and the 170 kDa beta subunits can assemble with the alpha subunits to form mature receptors. Post-translationally, autophosphorylated on tyrosine residues, including Tyr-1549 and Tyr-1550, in response to exogenous insulin. Tyr-1549 and Tyr-1550 are dephosphorylated by Ptp61F recruited by the dock/dreadlocks adapter protein. In terms of processing, phosphorylation of Tyr-1354 is required for Chico-binding.

It localises to the membrane. It is found in the cell projection. The protein resides in the axon. The protein localises to the growth cone membrane. The catalysed reaction is L-tyrosyl-[protein] + ATP = O-phospho-L-tyrosyl-[protein] + ADP + H(+). Its activity is regulated as follows. Activated in response to insulin. Autophosphorylation activates the kinase activity. Functionally, has a ligand-stimulated tyrosine-protein kinase activity. Binds 3 insulin-like peptide ligands. Regulates cell number and cell size during development by regulating cell growth and survival, affecting body size and organ size, including ovaries and imaginal disks. Plays a role in life-span determination. May be involved in regulation of other neuroendocrine signaling pathways. Involved in the development of the embryonic nervous system. Functions upstream of dock/dreadlocks for photoreceptor (R cell) axon guidance and targeting in the visual system. Involved in the acs mediated recovery of gut enterocytes following the cytoplasmic purge response to intestinal bacterial infection. The chain is Insulin-like receptor from Drosophila melanogaster (Fruit fly).